Here is a 119-residue protein sequence, read N- to C-terminus: Gibberellin-regulated protein 9 (119 aa).

A signal peptide spans 1–24 (MKKMNVVAFVTLIISFLLLSQVLA).

The protein belongs to the GASA family. Post-translationally, six disulfide bonds may be present.

The protein resides in the secreted. Gibberellin-regulated protein that may function in hormonal controlled steps of development such as seed germination, flowering and seed maturation. In Arabidopsis thaliana (Mouse-ear cress), this protein is Gibberellin-regulated protein 9 (GASA9).